The sequence spans 508 residues: UDP-N-acetylmuramoyl-L-alanyl-D-glutamate--2,6-diaminopimelate ligase (508 aa).

UDP-N-acetyl-alpha-D-muramoyl-L-alanyl-D-glutamate is bound at residue S43. An ATP-binding site is contributed by 124–130 (GTNGKTT). UDP-N-acetyl-alpha-D-muramoyl-L-alanyl-D-glutamate-binding positions include 166–167 (TT), S193, and R201. At K233 the chain carries N6-carboxylysine. Meso-2,6-diaminopimelate-binding positions include R404, 428–431 (DNPR), G478, and E482. Positions 428–431 (DNPR) match the Meso-diaminopimelate recognition motif motif.

It belongs to the MurCDEF family. MurE subfamily. It depends on Mg(2+) as a cofactor. Post-translationally, carboxylation is probably crucial for Mg(2+) binding and, consequently, for the gamma-phosphate positioning of ATP.

Its subcellular location is the cytoplasm. It catalyses the reaction UDP-N-acetyl-alpha-D-muramoyl-L-alanyl-D-glutamate + meso-2,6-diaminopimelate + ATP = UDP-N-acetyl-alpha-D-muramoyl-L-alanyl-gamma-D-glutamyl-meso-2,6-diaminopimelate + ADP + phosphate + H(+). It participates in cell wall biogenesis; peptidoglycan biosynthesis. In terms of biological role, catalyzes the addition of meso-diaminopimelic acid to the nucleotide precursor UDP-N-acetylmuramoyl-L-alanyl-D-glutamate (UMAG) in the biosynthesis of bacterial cell-wall peptidoglycan. The polypeptide is UDP-N-acetylmuramoyl-L-alanyl-D-glutamate--2,6-diaminopimelate ligase (Chlorobaculum tepidum (strain ATCC 49652 / DSM 12025 / NBRC 103806 / TLS) (Chlorobium tepidum)).